We begin with the raw amino-acid sequence, 521 residues long: Colicin-E1* (521 aa).

2 disordered regions span residues 26–52 (NGNP…AAIH) and 127–163 (SGCA…EKEQ). Gly residues predominate over residues 30–42 (DGSGSGGGGGTGG). Positions 133 to 145 (KQKKKPVKKRKRA) are enriched in basic residues. Positions 146-163 (EKSFQEAEQRRKEIEKEQ) are enriched in basic and acidic residues. The next 2 helical transmembrane spans lie at 470–486 (AVDA…FSVL) and 493–509 (IWGI…FIDK).

The protein belongs to the channel forming colicin family.

The protein resides in the cell membrane. In terms of biological role, this colicin is a channel-forming colicin. This class of transmembrane toxins depolarize the cytoplasmic membrane, leading to dissipation of cellular energy. Colicins are polypeptide toxins produced by and active against E.coli and closely related bacteria. The polypeptide is Colicin-E1* (cea) (Shigella sonnei).